The following is a 1137-amino-acid chain: Phytochrome C (1137 aa).

Residues 1 to 18 (MSSSRSNNRATCSRSSSA) show a composition bias toward low complexity. Positions 1 to 27 (MSSSRSNNRATCSRSSSARSKHSARVV) are disordered. The GAF domain maps to 217–400 (NLSLLCDVLV…VFGIQINKEV (184 aa)). Cys-322 lines the phytochromobilin pocket. PAS domains lie at 620–690 (VTNE…LQGI) and 750–824 (IQGD…TKLS). Residues 904-1124 (YIRQELRNPL…IVLVEFPVAQ (221 aa)) form the Histidine kinase domain.

It belongs to the phytochrome family. In terms of assembly, homodimer. Post-translationally, contains one covalently linked phytochromobilin chromophore.

In terms of biological role, regulatory photoreceptor which exists in two forms that are reversibly interconvertible by light: the Pr form that absorbs maximally in the red region of the spectrum and the Pfr form that absorbs maximally in the far-red region. Photoconversion of Pr to Pfr induces an array of morphogenic responses, whereas reconversion of Pfr to Pr cancels the induction of those responses. Pfr controls the expression of a number of nuclear genes including those encoding the small subunit of ribulose-bisphosphate carboxylase, chlorophyll A/B binding protein, protochlorophyllide reductase, rRNA, etc. It also controls the expression of its own gene(s) in a negative feedback fashion. The polypeptide is Phytochrome C (PHYC) (Oryza sativa subsp. japonica (Rice)).